The sequence spans 452 residues: Nuclear distribution protein nudF 2 (452 aa).

A coiled-coil region spans residues 76–101 (ALQILDLESKVAGLQAELSSLTLTSR). WD repeat units follow at residues 123-164 (SHRD…RTLK), 166-206 (HIRA…ANIR), 210-250 (GHDH…CVKV), 253-292 (SSDA…QKSA), 295-355 (GHEN…IKTL), 357-396 (GHDN…KLVK), and 401-449 (AHSH…SCVR).

This sequence belongs to the WD repeat LIS1/nudF family. Self-associates. Interacts with nudE and dynein.

Its subcellular location is the cytoplasm. The protein resides in the cytoskeleton. It is found in the spindle pole. Functionally, positively regulates the activity of the minus-end directed microtubule motor protein dynein. May enhance dynein-mediated microtubule sliding by targeting dynein to the microtubule plus end. Required for nuclear migration during vegetative growth as well as development. Required for retrograde early endosome (EE) transport from the hyphal tip. Required for localization of dynein to the mitotic spindle poles. Recruits additional proteins to the dynein complex at SPBs. The polypeptide is Nuclear distribution protein nudF 2 (Talaromyces marneffei (strain ATCC 18224 / CBS 334.59 / QM 7333) (Penicillium marneffei)).